We begin with the raw amino-acid sequence, 513 residues long: Light-independent protochlorophyllide reductase subunit B (513 aa).

Asp-36 contributes to the [4Fe-4S] cluster binding site. The active-site Proton donor is Asp-299. 434-435 contacts substrate; that stretch reads GM.

This sequence belongs to the ChlB/BchB/BchZ family. As to quaternary structure, protochlorophyllide reductase is composed of three subunits; ChlL, ChlN and ChlB. Forms a heterotetramer of two ChlB and two ChlN subunits. [4Fe-4S] cluster is required as a cofactor.

Its subcellular location is the plastid. The protein localises to the chloroplast. It catalyses the reaction chlorophyllide a + oxidized 2[4Fe-4S]-[ferredoxin] + 2 ADP + 2 phosphate = protochlorophyllide a + reduced 2[4Fe-4S]-[ferredoxin] + 2 ATP + 2 H2O. It functions in the pathway porphyrin-containing compound metabolism; chlorophyll biosynthesis (light-independent). Functionally, component of the dark-operative protochlorophyllide reductase (DPOR) that uses Mg-ATP and reduced ferredoxin to reduce ring D of protochlorophyllide (Pchlide) to form chlorophyllide a (Chlide). This reaction is light-independent. The NB-protein (ChlN-ChlB) is the catalytic component of the complex. The polypeptide is Light-independent protochlorophyllide reductase subunit B (Marchantia polymorpha (Common liverwort)).